A 52-amino-acid polypeptide reads, in one-letter code: Phospholamban (52 aa).

N-acetylmethionine is present on Met-1. The Cytoplasmic segment spans residues Met-1–Leu-31. Position 16 is a phosphoserine; by PKA (Ser-16). At Thr-17 the chain carries Phosphothreonine; by CaMK2. Residues Phe-32–Leu-52 form a helical membrane-spanning segment. Cys-36 carries the S-palmitoyl cysteine lipid modification.

This sequence belongs to the phospholamban family. As to quaternary structure, homopentamer. Can also form heterooligomers with other sarcoplasmic/endoplasmic reticulum calcium ATPase (SERCA) regulators ARLN, ERLN, SLN and STRIT1/DWORF. Monomer. Interacts with HAX1. Interacts as a monomer with ATP2A2; the interaction decreases ATP2A2 Ca(2+) affinity. Interacts with VMP1; VMP1 competes with PLN and SLN to prevent them from forming an inhibitory complex with ATP2A2. Interacts with S100A1 in a Ca(2+)-dependent manner. Post-translationally, phosphorylated at Thr-17 by CaMK2, and in response to beta-adrenergic stimulation. Phosphorylation by DMPK may stimulate sarcoplasmic reticulum calcium uptake in cardiomyocytes. Phosphorylation by PKA abolishes the inhibition of ATP2A2-mediated calcium uptake. In terms of processing, palmitoylated by ZDHHC16, promoting formation of the homopentamer. In elongated spermatids, proteolytically cleaved by SPPL2C which modulates intracellular Ca(2+) homeostasis. Expressed in testis (at protein level). In brain, expressed specifically in GABAergic GAD67+ neurons of the thalamic reticular nucleus where it colocalizes with ATP2A2/SERCA2 (at protein level). Expressed in the bladder and in the atria and ventricles of the heart.

It is found in the endoplasmic reticulum membrane. Its subcellular location is the sarcoplasmic reticulum membrane. It localises to the mitochondrion membrane. The protein resides in the membrane. Its function is as follows. Reversibly inhibits the activity of ATP2A2/SERCA2 in cardiac sarcoplasmic reticulum by decreasing the apparent affinity of the ATPase for Ca(2+). Binds preferentially to the ATP-bound E1 conformational form of ATP2A2 which predominates at low Ca(2+) concentrations during the diastolic phase of the cardiac cycle. Inhibits ATP2A2 Ca(2+) affinity by disrupting its allosteric activation by ATP. Modulates the contractility of the heart muscle in response to physiological stimuli via its effects on ATP2A2. Modulates calcium re-uptake during muscle relaxation and plays an important role in calcium homeostasis in the heart muscle. The degree of ATP2A2 inhibition depends on the oligomeric state of PLN. ATP2A2 inhibition is alleviated by PLN phosphorylation. Also inhibits the activity of ATP2A3/SERCA3. Controls intracellular Ca(2+) levels in elongated spermatids and may play a role in germ cell differentiation. In the thalamic reticular nucleus of the brain, plays a role in the regulation of sleep patterns and executive functioning. The polypeptide is Phospholamban (Mus musculus (Mouse)).